A 109-amino-acid polypeptide reads, in one-letter code: Ferredoxin (109 aa).

4Fe-4S ferredoxin-type domains follow at residues 2 to 30 and 31 to 60; these read TYVVNDECVKCKYTDCVDVCPVDCFYEGE and FMLVINPDECIDCGVCVPDCPIDAIKPESP. [3Fe-4S] cluster contacts are provided by C9 and C17. Positions 21, 40, 43, and 46 each coordinate [4Fe-4S] cluster. C50 serves as a coordination point for [3Fe-4S] cluster.

[4Fe-4S] cluster serves as cofactor. It depends on [3Fe-4S] cluster as a cofactor.

In terms of biological role, ferredoxins are iron-sulfur proteins that transfer electrons in a wide variety of metabolic reactions. This Rickettsia felis (strain ATCC VR-1525 / URRWXCal2) (Rickettsia azadi) protein is Ferredoxin (fdxA).